A 213-amino-acid polypeptide reads, in one-letter code: mRNA-decapping protein OPG121 (213 aa).

Residues Glu16 and Arg50 each coordinate N(7)-methyl-GTP. Residues 30-209 (KDTHVFAACI…EYLSYIYNML (180 aa)) form the Nudix hydrolase domain. The Nudix box signature appears at 111–132 (GKLDKKESIKDCLRRELKEESD). Glu126 serves as the catalytic Nucleophile. The Mg(2+) site is built by Glu126 and Glu130. Asp151 lines the N(7)-methyl-GTP pocket. Glu183 contributes to the Mg(2+) binding site.

This sequence belongs to the Nudix hydrolase family. It depends on Mg(2+) as a cofactor. Requires Mn(2+) as cofactor.

It catalyses the reaction a 5'-end (N(7)-methyl 5'-triphosphoguanosine)-guanosine in mRNA + H2O = a 5'-end phospho-guanosine in mRNA + N(7)-methyl-GDP + 2 H(+). In terms of biological role, decapping enzyme that remove the protective 5'-cap from both host and viral mRNAs to commit transcripts for decay by the cellular exonuclease XRN1. Accelerates viral and cellular mRNA turnover to eliminate competing host mRNAs and allow stage-specific synthesis of viral proteins. Acceleration of the turnover of cellular transcripts may even promote the shutoff of host protein synthesis. This chain is mRNA-decapping protein OPG121 (OPG121), found in Vaccinia virus (strain Western Reserve) (VACV).